The following is a 302-amino-acid chain: Bifunctional protein FolD (302 aa).

NADP(+) is bound by residues 165 to 167, S190, and I231; that span reads GRS.

Belongs to the tetrahydrofolate dehydrogenase/cyclohydrolase family. Homodimer.

It carries out the reaction (6R)-5,10-methylene-5,6,7,8-tetrahydrofolate + NADP(+) = (6R)-5,10-methenyltetrahydrofolate + NADPH. The enzyme catalyses (6R)-5,10-methenyltetrahydrofolate + H2O = (6R)-10-formyltetrahydrofolate + H(+). It functions in the pathway one-carbon metabolism; tetrahydrofolate interconversion. In terms of biological role, catalyzes the oxidation of 5,10-methylenetetrahydrofolate to 5,10-methenyltetrahydrofolate and then the hydrolysis of 5,10-methenyltetrahydrofolate to 10-formyltetrahydrofolate. The polypeptide is Bifunctional protein FolD (Prochlorococcus marinus (strain MIT 9303)).